The following is a 379-amino-acid chain: Adenylosuccinate synthetase (379 aa).

GTP contacts are provided by residues 11 to 17 (GDEGKGK) and 39 to 41 (GHT). Asp-12 acts as the Proton acceptor in catalysis. Mg(2+)-binding residues include Asp-12 and Gly-39. Residues 12-15 (DEGK), 37-40 (NAGH), Thr-127, Arg-141, Gln-223, Thr-238, and Arg-302 contribute to the IMP site. Catalysis depends on His-40, which acts as the Proton donor. 298-304 (TTTGRGR) contacts substrate. GTP contacts are provided by residues Arg-304 and 330–332 (KLD).

The protein belongs to the adenylosuccinate synthetase family. Homodimer. Mg(2+) is required as a cofactor.

It is found in the cytoplasm. The enzyme catalyses IMP + L-aspartate + GTP = N(6)-(1,2-dicarboxyethyl)-AMP + GDP + phosphate + 2 H(+). Its pathway is purine metabolism; AMP biosynthesis via de novo pathway; AMP from IMP: step 1/2. Plays an important role in the de novo pathway of purine nucleotide biosynthesis. Catalyzes the first committed step in the biosynthesis of AMP from IMP. This is Adenylosuccinate synthetase from Methanosarcina mazei (strain ATCC BAA-159 / DSM 3647 / Goe1 / Go1 / JCM 11833 / OCM 88) (Methanosarcina frisia).